The sequence spans 483 residues: MLFLGMANAYVMRTNMSVAIVAMVNHTAIKSGEEEYDDECGDRDIPIDDSQDGEFPWNAALQGYILSSFFYGYVITQIPFGILAKKYGSLRFLGYGMLINSVFAFLVPVAAREGGVWGLCAVRFIQGLGEGPIVPCTHAMLAKWIPPNERSRMGAAVYAGAQFGTIISMPLSGLLAEYGFDGGWPSIFYVFGIVGTVWSIAFLIFVYEDPSTHPKIDEREKKYINESLWGTDVIKSPPIPFKSIVKSLPFYAILFAHMGHNYGYETLMTELPTYMKQVLRFSLKSNGLLSSLPYLAMWLLSMFISVIADWMISSKRFSLTATRKIINSIGQYGPGLALIAASYTGCDRALTLAILTIGVGLNGGIYSGFKINHLDLTPRFAGFLMSITNCSANLAGLLAPIAAGNLISDPSKPVMGQWQIVFFIAAFVYIICGTFYNIFGSGERQFWDNPSEDEQKPALESSSTTNPPRLSNGSSAPRAISSS.

Helical transmembrane passes span 64–84 (YILSSFFYGYVITQIPFGILA), 90–110 (LRFLGYGMLINSVFAFLVPVA), 187–207 (IFYVFGIVGTVWSIAFLIFVY), 292–312 (LPYLAMWLLSMFISVIADWMI), 349–369 (ALTLAILTIGVGLNGGIYSGF), 383–403 (FLMSITNCSANLAGLLAPIAA), and 420–440 (IVFFIAAFVYIICGTFYNIFG). Positions 447–483 (WDNPSEDEQKPALESSSTTNPPRLSNGSSAPRAISSS) are disordered. Over residues 460 to 483 (ESSSTTNPPRLSNGSSAPRAISSS) the composition is skewed to polar residues.

It belongs to the major facilitator superfamily. Sodium/anion cotransporter family.

Its subcellular location is the membrane. In terms of biological role, may be an inorganic phosphate cotransporter. This is Putative inorganic phosphate cotransporter (Picot) from Drosophila ananassae (Fruit fly).